We begin with the raw amino-acid sequence, 518 residues long: Bifunctional purine biosynthesis protein PurH (518 aa).

The region spanning 1 to 146 is the MGS-like domain; the sequence is MGRMALLSTS…KNHAHVTVLV (146 aa).

The protein belongs to the PurH family.

The enzyme catalyses (6R)-10-formyltetrahydrofolate + 5-amino-1-(5-phospho-beta-D-ribosyl)imidazole-4-carboxamide = 5-formamido-1-(5-phospho-D-ribosyl)imidazole-4-carboxamide + (6S)-5,6,7,8-tetrahydrofolate. The catalysed reaction is IMP + H2O = 5-formamido-1-(5-phospho-D-ribosyl)imidazole-4-carboxamide. It functions in the pathway purine metabolism; IMP biosynthesis via de novo pathway; 5-formamido-1-(5-phospho-D-ribosyl)imidazole-4-carboxamide from 5-amino-1-(5-phospho-D-ribosyl)imidazole-4-carboxamide (10-formyl THF route): step 1/1. Its pathway is purine metabolism; IMP biosynthesis via de novo pathway; IMP from 5-formamido-1-(5-phospho-D-ribosyl)imidazole-4-carboxamide: step 1/1. This is Bifunctional purine biosynthesis protein PurH from Thermosynechococcus vestitus (strain NIES-2133 / IAM M-273 / BP-1).